Reading from the N-terminus, the 271-residue chain is Acetyl-coenzyme A carboxylase carboxyl transferase subunit alpha (271 aa).

The region spanning 1-247 is the CoA carboxyltransferase C-terminal domain; that stretch reads MSRELIRTAD…KKTILEALGE (247 aa).

It belongs to the AccA family. As to quaternary structure, acetyl-CoA carboxylase is a heterohexamer composed of biotin carboxyl carrier protein (AccB), biotin carboxylase (AccC) and two subunits each of ACCase subunit alpha (AccA) and ACCase subunit beta (AccD).

It is found in the cytoplasm. It catalyses the reaction N(6)-carboxybiotinyl-L-lysyl-[protein] + acetyl-CoA = N(6)-biotinyl-L-lysyl-[protein] + malonyl-CoA. Its pathway is lipid metabolism; malonyl-CoA biosynthesis; malonyl-CoA from acetyl-CoA: step 1/1. In terms of biological role, component of the acetyl coenzyme A carboxylase (ACC) complex. First, biotin carboxylase catalyzes the carboxylation of biotin on its carrier protein (BCCP) and then the CO(2) group is transferred by the carboxyltransferase to acetyl-CoA to form malonyl-CoA. The chain is Acetyl-coenzyme A carboxylase carboxyl transferase subunit alpha from Clostridium perfringens (strain 13 / Type A).